A 96-amino-acid polypeptide reads, in one-letter code: UPF0213 protein Lreu_0682 (96 aa).

Residues 4-81 (EKYYIYVLYC…KHQTRRQKEK (78 aa)) form the GIY-YIG domain.

The protein belongs to the UPF0213 family.

The polypeptide is UPF0213 protein Lreu_0682 (Limosilactobacillus reuteri (strain DSM 20016) (Lactobacillus reuteri)).